The sequence spans 300 residues: Cation-efflux pump FieF (300 aa).

Residues 24–44 (LLIKIFAWWYTGSVSILAALV) traverse the membrane as a helical segment. Zn(2+)-binding residues include Asp45 and Asp49. The next 2 helical transmembrane spans lie at 82–102 (AALAQSMFISGSALFLFLTSI) and 114–134 (PGVGIGVTVIALICTIILVTF). Residues His153 and Asp157 each coordinate Zn(2+). A run of 2 helical transmembrane segments spans residues 156–176 (SDVMMNGAILIALGLSWYGWH) and 178–198 (ADALFALGIGIYILYSALRMG).

This sequence belongs to the cation diffusion facilitator (CDF) transporter (TC 2.A.4) family. FieF subfamily. As to quaternary structure, homodimer.

It is found in the cell inner membrane. It catalyses the reaction Zn(2+)(in) + H(+)(out) = Zn(2+)(out) + H(+)(in). The catalysed reaction is Cd(2+)(in) + H(+)(out) = Cd(2+)(out) + H(+)(in). It carries out the reaction Fe(2+)(in) + H(+)(out) = Fe(2+)(out) + H(+)(in). Its function is as follows. Divalent metal cation transporter which exports Zn(2+), Cd(2+) and possibly Fe(2+). May be involved in zinc and iron detoxification by efflux. The polypeptide is Cation-efflux pump FieF (Salmonella schwarzengrund (strain CVM19633)).